The primary structure comprises 406 residues: Cysteine desulfurase (406 aa).

K226 carries the post-translational modification N6-(pyridoxal phosphate)lysine. C364 functions as the Cysteine persulfide intermediate in the catalytic mechanism.

The protein belongs to the class-V pyridoxal-phosphate-dependent aminotransferase family. Csd subfamily. Homodimer. Interacts with SufE and the SufBCD complex composed of SufB, SufC and SufD. The interaction with SufE is required to mediate the direct transfer of the sulfur atom from the S-sulfanylcysteine. The cofactor is pyridoxal 5'-phosphate.

It is found in the cytoplasm. It carries out the reaction (sulfur carrier)-H + L-cysteine = (sulfur carrier)-SH + L-alanine. The enzyme catalyses L-selenocysteine + AH2 = hydrogenselenide + L-alanine + A + H(+). It participates in cofactor biosynthesis; iron-sulfur cluster biosynthesis. Functionally, cysteine desulfurases mobilize the sulfur from L-cysteine to yield L-alanine, an essential step in sulfur metabolism for biosynthesis of a variety of sulfur-containing biomolecules. Component of the suf operon, which is activated and required under specific conditions such as oxidative stress and iron limitation. Acts as a potent selenocysteine lyase in vitro, that mobilizes selenium from L-selenocysteine. Selenocysteine lyase activity is however unsure in vivo. This chain is Cysteine desulfurase, found in Escherichia coli O127:H6 (strain E2348/69 / EPEC).